A 398-amino-acid polypeptide reads, in one-letter code: Carbamoyl phosphate synthase large chain (398 aa).

The ATP-grasp domain maps to 1 to 187 (KLGVPQPEGG…LAKIAAKVIV (187 aa)). The segment at 1 to 255 (KLGVPQPEGG…YKAELAADNV (255 aa)) is carbamoyl phosphate synthetic domain. ATP contacts are provided by arginine 32, aspartate 71, leucine 73, glutamate 78, glycine 103, valine 104, histidine 105, serine 106, glutamine 146, and glutamate 158. Mg(2+) is bound by residues glutamine 146, glutamate 158, and asparagine 160. Glutamine 146, glutamate 158, and asparagine 160 together coordinate Mn(2+). The MGS-like domain occupies 254 to 395 (NVLPLTGKVF…NEYHKEMEEE (142 aa)). An allosteric domain region spans residues 256–398 (LPLTGKVFLS…HKEMEEENKV (143 aa)).

The protein belongs to the CarB family. In terms of assembly, composed of two chains; the small (or glutamine) chain promotes the hydrolysis of glutamine to ammonia, which is used by the large (or ammonia) chain to synthesize carbamoyl phosphate. Tetramer of heterodimers (alpha,beta)4. It depends on Mg(2+) as a cofactor. Mn(2+) serves as cofactor.

The catalysed reaction is hydrogencarbonate + L-glutamine + 2 ATP + H2O = carbamoyl phosphate + L-glutamate + 2 ADP + phosphate + 2 H(+). The enzyme catalyses hydrogencarbonate + NH4(+) + 2 ATP = carbamoyl phosphate + 2 ADP + phosphate + 2 H(+). It functions in the pathway amino-acid biosynthesis; L-arginine biosynthesis; carbamoyl phosphate from bicarbonate: step 1/1. Its pathway is pyrimidine metabolism; UMP biosynthesis via de novo pathway; (S)-dihydroorotate from bicarbonate: step 1/3. In terms of biological role, large subunit of the glutamine-dependent carbamoyl phosphate synthetase (CPSase). CPSase catalyzes the formation of carbamoyl phosphate from the ammonia moiety of glutamine, carbonate, and phosphate donated by ATP, constituting the first step of 2 biosynthetic pathways, one leading to arginine and/or urea and the other to pyrimidine nucleotides. The large subunit (synthetase) binds the substrates ammonia (free or transferred from glutamine from the small subunit), hydrogencarbonate and ATP and carries out an ATP-coupled ligase reaction, activating hydrogencarbonate by forming carboxy phosphate which reacts with ammonia to form carbamoyl phosphate. The protein is Carbamoyl phosphate synthase large chain of Methanosarcina barkeri.